A 429-amino-acid polypeptide reads, in one-letter code: G2/mitotic-specific cyclin-B1 (429 aa).

Positions 1 to 14 (MALRVTRNTKLNTE) are enriched in polar residues. Disordered stretches follow at residues 1–21 (MALRVTRNTKLNTENKAKVSM) and 71–128 (TGKV…PMET). Lysine 73 is modified (N6-acetyllysine). Positions 92–106 (PEVELAEPEPEPEPV) are enriched in acidic residues. Serine 122 is modified (phosphoserine; by CDK1). A Phosphoserine modification is found at serine 124. Serine 129 carries the phosphoserine; by PLK1 modification. Position 143 is a phosphoserine (serine 143). Interaction with CDK2 regions lie at residues 165–173 (EYVKDIYAY) and 254–257 (YEEM). Position 317 is a phosphothreonine (threonine 317).

Belongs to the cyclin family. Cyclin AB subfamily. In terms of assembly, interacts with the CDC2 protein kinase to form a serine/threonine kinase holoenzyme complex also known as maturation promoting factor (MPF). The cyclin subunit imparts substrate specificity to the complex. Binds HEI10. Interacts with catalytically active RALBP1 and CDC2 during mitosis to form an endocytotic complex during interphase. Interacts with CCNF; interaction is required for nuclear localization. Interacts with CDK5RAP3. Interacts with RFPL4A and UBE2A. Interacts with INCA1. Post-translationally, ubiquitinated by the SCF(NIPA) complex during interphase, leading to its destruction. Not ubiquitinated during G2/M phases. Phosphorylated by PLK1 at Ser-129 on centrosomes during prophase: phosphorylation by PLK1 does not cause nuclear import. Phosphorylation at Ser-143 was also reported to be mediated by PLK1 but Ser-129 seems to be the primary phosphorylation site.

The protein localises to the cytoplasm. Its subcellular location is the nucleus. It is found in the cytoskeleton. The protein resides in the microtubule organizing center. It localises to the centrosome. Essential for the control of the cell cycle at the G2/M (mitosis) transition. The polypeptide is G2/mitotic-specific cyclin-B1 (CCNB1) (Cricetulus griseus (Chinese hamster)).